Here is a 445-residue protein sequence, read N- to C-terminus: Tubulin beta-3 chain (445 aa).

Positions 1–4 match the MREI motif motif; it reads MREI. GTP-binding residues include Q11, E69, S138, G142, T143, G144, N204, and N226. E69 is a binding site for Mg(2+). The interval 425 to 445 is disordered; it reads YQDATAEEEGEFEEEAEEEAE. Over residues 429 to 445 the composition is skewed to acidic residues; that stretch reads TAEEEGEFEEEAEEEAE. Residue E438 is modified to 5-glutamyl polyglutamate.

The protein belongs to the tubulin family. In terms of assembly, dimer of alpha and beta chains. A typical microtubule is a hollow water-filled tube with an outer diameter of 25 nm and an inner diameter of 15 nM. Alpha-beta heterodimers associate head-to-tail to form protofilaments running lengthwise along the microtubule wall with the beta-tubulin subunit facing the microtubule plus end conferring a structural polarity. Microtubules usually have 13 protofilaments but different protofilament numbers can be found in some organisms and specialized cells. The cofactor is Mg(2+). Post-translationally, some glutamate residues at the C-terminus are polyglycylated, resulting in polyglycine chains on the gamma-carboxyl group. Glycylation is mainly limited to tubulin incorporated into axonemes (cilia and flagella) whereas glutamylation is prevalent in neuronal cells, centrioles, axonemes, and the mitotic spindle. Both modifications can coexist on the same protein on adjacent residues, and lowering polyglycylation levels increases polyglutamylation, and reciprocally. The precise function of polyglycylation is still unclear. In terms of processing, some glutamate residues at the C-terminus are polyglutamylated, resulting in polyglutamate chains on the gamma-carboxyl group. Polyglutamylation plays a key role in microtubule severing by spastin (SPAST). SPAST preferentially recognizes and acts on microtubules decorated with short polyglutamate tails: severing activity by SPAST increases as the number of glutamates per tubulin rises from one to eight, but decreases beyond this glutamylation threshold. In terms of tissue distribution, highly expressed in testis.

It is found in the cytoplasm. Its subcellular location is the cytoskeleton. Tubulin is the major constituent of microtubules, a cylinder consisting of laterally associated linear protofilaments composed of alpha- and beta-tubulin heterodimers. Microtubules grow by the addition of GTP-tubulin dimers to the microtubule end, where a stabilizing cap forms. Below the cap, tubulin dimers are in GDP-bound state, owing to GTPase activity of alpha-tubulin. TUBB3 plays a role in dorsal root ganglion axon projection towards the spinal cord. The sequence is that of Tubulin beta-3 chain from Gallus gallus (Chicken).